The following is a 255-amino-acid chain: Cytochrome c oxidase subunit 2 (255 aa).

At 1–42 (MKFFFFSFINYKVLNDAARPWQIGFQDPATPIMEGIVNLHHD) the chain is on the mitochondrial intermembrane side. Residues 43-63 (IIFFLIIIIIFVSWILFRTLF) traverse the membrane as a helical segment. At 64-83 (LFNSKTNPVAYNFSHGTFIE) the chain is on the mitochondrial matrix side. The helical transmembrane segment at 84-104 (LLWTLTPSLVLIGIAVPSFAL) threads the bilayer. At 105 to 255 (LYSIDEIIDP…IRWVQNKILD (151 aa)) the chain is on the mitochondrial intermembrane side. Histidine 187, cysteine 222, glutamate 224, cysteine 226, histidine 230, and methionine 233 together coordinate Cu cation. Residue glutamate 224 coordinates Mg(2+).

Belongs to the cytochrome c oxidase subunit 2 family. In terms of assembly, component of the cytochrome c oxidase (complex IV, CIV), a multisubunit enzyme composed of a catalytic core of 3 subunits and several supernumerary subunits. The complex exists as a monomer or a dimer and forms supercomplexes (SCs) in the inner mitochondrial membrane with ubiquinol-cytochrome c oxidoreductase (cytochrome b-c1 complex, complex III, CIII). It depends on Cu cation as a cofactor.

The protein localises to the mitochondrion inner membrane. The catalysed reaction is 4 Fe(II)-[cytochrome c] + O2 + 8 H(+)(in) = 4 Fe(III)-[cytochrome c] + 2 H2O + 4 H(+)(out). Functionally, component of the cytochrome c oxidase, the last enzyme in the mitochondrial electron transport chain which drives oxidative phosphorylation. The respiratory chain contains 3 multisubunit complexes succinate dehydrogenase (complex II, CII), ubiquinol-cytochrome c oxidoreductase (cytochrome b-c1 complex, complex III, CIII) and cytochrome c oxidase (complex IV, CIV), that cooperate to transfer electrons derived from NADH and succinate to molecular oxygen, creating an electrochemical gradient over the inner membrane that drives transmembrane transport and the ATP synthase. Cytochrome c oxidase is the component of the respiratory chain that catalyzes the reduction of oxygen to water. Electrons originating from reduced cytochrome c in the intermembrane space (IMS) are transferred via the dinuclear copper A center (CU(A)) of subunit 2 and heme A of subunit 1 to the active site in subunit 1, a binuclear center (BNC) formed by heme A3 and copper B (CU(B)). The BNC reduces molecular oxygen to 2 water molecules using 4 electrons from cytochrome c in the IMS and 4 protons from the mitochondrial matrix. The sequence is that of Cytochrome c oxidase subunit 2 (COX2) from Cyanidium caldarium (Red alga).